Consider the following 113-residue polypeptide: Small ribosomal subunit protein bS18 (113 aa).

Residues 1 to 41 are disordered; it reads MSEEKIVNTEAAPEAVAERPARAERSERPERPAKGPFGKKR. Residues 16–33 are compositionally biased toward basic and acidic residues; the sequence is VAERPARAERSERPERPA.

The protein belongs to the bacterial ribosomal protein bS18 family. As to quaternary structure, part of the 30S ribosomal subunit. Forms a tight heterodimer with protein bS6.

Functionally, binds as a heterodimer with protein bS6 to the central domain of the 16S rRNA, where it helps stabilize the platform of the 30S subunit. The protein is Small ribosomal subunit protein bS18 of Elusimicrobium minutum (strain Pei191).